The chain runs to 546 residues: Sulfite oxidase, mitochondrial (546 aa).

The N-terminal 80 residues, 1 to 80 (MLLQLYRSVV…YHEHRCRASQ (80 aa)), are a transit peptide targeting the mitochondrion. In terms of domain architecture, Cytochrome b5 heme-binding spans 83–162 (PRMYSKEDVR…LAEYKIGELN (80 aa)). Position 119 (histidine 119) interacts with heme b. Residue serine 124 is modified to Phosphoserine. Heme b is bound by residues histidine 144, glutamine 146, and histidine 148. Positions 166–175 (SMSPSVEASD) are hinge. A moco domain region spans residues 176 to 402 (PYADDPIRHP…YSHWQRRDYK (227 aa)). Mo-molybdopterin contacts are provided by residues 216–220 (FTRNH), cysteine 265, aspartate 323, histidine 362, arginine 367, and 378–380 (HVK). The homodimerization stretch occupies residues 403 to 539 (GFSPSVDWDT…RGVLSNAWHR (137 aa)).

Homodimer. Heme b serves as cofactor. The cofactor is Mo-molybdopterin.

It localises to the mitochondrion intermembrane space. It catalyses the reaction sulfite + O2 + H2O = sulfate + H2O2. The protein operates within energy metabolism; sulfur metabolism. In terms of biological role, catalyzes the oxidation of sulfite to sulfate, the terminal reaction in the oxidative degradation of sulfur-containing amino acids. The sequence is that of Sulfite oxidase, mitochondrial (Suox) from Mus musculus (Mouse).